Reading from the N-terminus, the 270-residue chain is NADPH-dependent 7-cyano-7-deazaguanine reductase (270 aa).

79-81 (IES) contacts substrate. 81–82 (SK) contributes to the NADPH binding site. The Thioimide intermediate role is filled by cysteine 177. Catalysis depends on aspartate 184, which acts as the Proton donor. 216 to 217 (HE) serves as a coordination point for substrate. 245–246 (RG) is an NADPH binding site.

Belongs to the GTP cyclohydrolase I family. QueF type 2 subfamily. In terms of assembly, homodimer.

It is found in the cytoplasm. It catalyses the reaction 7-aminomethyl-7-carbaguanine + 2 NADP(+) = 7-cyano-7-deazaguanine + 2 NADPH + 3 H(+). The protein operates within tRNA modification; tRNA-queuosine biosynthesis. In terms of biological role, catalyzes the NADPH-dependent reduction of 7-cyano-7-deazaguanine (preQ0) to 7-aminomethyl-7-deazaguanine (preQ1). This is NADPH-dependent 7-cyano-7-deazaguanine reductase from Acinetobacter baumannii (strain SDF).